Here is a 149-residue protein sequence, read N- to C-terminus: Nucleoside diphosphate kinase (149 aa).

Residues Lys-9, Phe-57, Arg-85, Thr-91, Arg-102, and Asn-112 each coordinate ATP. His-115 (pros-phosphohistidine intermediate) is an active-site residue.

The protein belongs to the NDK family. Mg(2+) is required as a cofactor.

Its subcellular location is the cytoplasm. The enzyme catalyses a 2'-deoxyribonucleoside 5'-diphosphate + ATP = a 2'-deoxyribonucleoside 5'-triphosphate + ADP. It catalyses the reaction a ribonucleoside 5'-diphosphate + ATP = a ribonucleoside 5'-triphosphate + ADP. Major role in the synthesis of nucleoside triphosphates other than ATP. The ATP gamma phosphate is transferred to the NDP beta phosphate via a ping-pong mechanism, using a phosphorylated active-site intermediate. The chain is Nucleoside diphosphate kinase from Methanococcoides burtonii (strain DSM 6242 / NBRC 107633 / OCM 468 / ACE-M).